The sequence spans 228 residues: Probable septum site-determining protein MinC (228 aa).

This sequence belongs to the MinC family. Interacts with MinD and FtsZ.

In terms of biological role, cell division inhibitor that blocks the formation of polar Z ring septums. Rapidly oscillates between the poles of the cell to destabilize FtsZ filaments that have formed before they mature into polar Z rings. Prevents FtsZ polymerization. The sequence is that of Probable septum site-determining protein MinC from Yersinia pseudotuberculosis serotype O:1b (strain IP 31758).